The following is a 344-amino-acid chain: Outer membrane protein A (344 aa).

The Periplasmic portion of the chain corresponds to 1–14 (MKAIFVLNAAPKDN). A beta stranded membrane pass occupies residues 15 to 24 (TWYAGGKLGW). The Extracellular segment spans residues 25-49 (SQYHDTGFYGNGFQNNNGPTRNDQL). A beta stranded membrane pass occupies residues 50–59 (GAGAFGGYQV). Residues 60 to 62 (NPY) lie on the Periplasmic side of the membrane. A beta stranded transmembrane segment spans residues 63 to 71 (LGFEMGYDW). Over 72–89 (LGRMAYKGSVDNGAFKAQ) the chain is Extracellular. Residues 90-100 (GVQLTAKLGYP) form a beta stranded membrane-spanning segment. Over 101 to 104 (ITDD) the chain is Periplasmic. A beta stranded transmembrane segment spans residues 105 to 114 (LDIYTRLGGM). Residues 115 to 139 (VWRADSKGNYASTGVSRSEHDTGVS) are Extracellular-facing. The chain crosses the membrane as a beta stranded span at residues 140 to 149 (PVFAGGVEWA). Residues 150–153 (VTRD) are Periplasmic-facing. A beta stranded membrane pass occupies residues 154–162 (IATRLEYQW). Residues 163-179 (VNNIGDAGTVGTRPDNG) are Extracellular-facing. A beta stranded membrane pass occupies residues 180 to 188 (MLSLGVSYR). Residues 189–344 (FGQEDAAPVV…YKEVVTQPQA (156 aa)) are Periplasmic-facing. 4 consecutive repeat copies span residues 199 to 200 (AP), 201 to 202 (AP), 203 to 204 (AP), and 205 to 206 (AP). The tract at residues 199–206 (APAPAPAP) is 4 X 2 AA tandem repeats of A-P. Residues 208-336 (VATKHFTLKS…RVEIEVKGYK (129 aa)) enclose the OmpA-like domain. Cysteine 309 and cysteine 321 form a disulfide bridge.

Belongs to the outer membrane OOP (TC 1.B.6) superfamily. OmpA family. As to quaternary structure, monomer and homodimer.

It localises to the cell outer membrane. Its function is as follows. With TolR probably plays a role in maintaining the position of the peptidoglycan cell wall in the periplasm. Acts as a porin with low permeability that allows slow penetration of small solutes; an internal gate slows down solute passage. In terms of biological role, required for conjugation with F-type plasmids; probably serves as the mating receptor on recipient cells. The polypeptide is Outer membrane protein A (Klebsiella pneumoniae).